The chain runs to 216 residues: Orotate phosphoribosyltransferase (216 aa).

5-phospho-alpha-D-ribose 1-diphosphate-binding positions include arginine 101, lysine 105, histidine 107, and 127 to 135 (EDLISTGGS). Residue serine 131 coordinates orotate.

Belongs to the purine/pyrimidine phosphoribosyltransferase family. PyrE subfamily. Homodimer. Requires Mg(2+) as cofactor.

The enzyme catalyses orotidine 5'-phosphate + diphosphate = orotate + 5-phospho-alpha-D-ribose 1-diphosphate. It participates in pyrimidine metabolism; UMP biosynthesis via de novo pathway; UMP from orotate: step 1/2. In terms of biological role, catalyzes the transfer of a ribosyl phosphate group from 5-phosphoribose 1-diphosphate to orotate, leading to the formation of orotidine monophosphate (OMP). The protein is Orotate phosphoribosyltransferase of Cutibacterium acnes (strain DSM 16379 / KPA171202) (Propionibacterium acnes).